A 500-amino-acid chain; its full sequence is L-arabinose isomerase (500 aa).

Mn(2+) contacts are provided by glutamate 306, glutamate 333, histidine 349, and histidine 448.

It belongs to the arabinose isomerase family. It depends on Mn(2+) as a cofactor.

It carries out the reaction beta-L-arabinopyranose = L-ribulose. Its pathway is carbohydrate degradation; L-arabinose degradation via L-ribulose; D-xylulose 5-phosphate from L-arabinose (bacterial route): step 1/3. Functionally, catalyzes the conversion of L-arabinose to L-ribulose. The protein is L-arabinose isomerase of Cellvibrio japonicus (strain Ueda107) (Pseudomonas fluorescens subsp. cellulosa).